Consider the following 309-residue polypeptide: Carboxylesterase Culp6 homolog (309 aa).

A helical transmembrane segment spans residues 5-25; it reads ITVIAVLIVLALIGVGIVQYV. The cysteines at positions 55 and 146 are disulfide-linked. Catalysis depends on residues serine 157, aspartate 253, and histidine 279. Cysteine 249 and cysteine 256 are disulfide-bonded.

It belongs to the cutinase family.

The protein localises to the cell membrane. The catalysed reaction is a butanoate ester + H2O = an aliphatic alcohol + butanoate + H(+). With respect to regulation, inhibited by tetrahydrolipstatin (THL), a specific lipase inhibitor. Its function is as follows. Esterase that may be involved in cell wall biosynthesis and/or maintenance. Hydrolyzes pNP-butyrate (C4). This is Carboxylesterase Culp6 homolog from Corynebacterium glutamicum (strain ATCC 13032 / DSM 20300 / JCM 1318 / BCRC 11384 / CCUG 27702 / LMG 3730 / NBRC 12168 / NCIMB 10025 / NRRL B-2784 / 534).